A 485-amino-acid chain; its full sequence is NADH-quinone oxidoreductase subunit N (485 aa).

14 consecutive transmembrane segments (helical) span residues 8–28 (LIAL…MLSI), 35–55 (FLNA…LWFV), 71–91 (GFAM…CTFA), 105–125 (FYLL…ANHL), 127–147 (ALFL…GYAF), 159–179 (YTIL…LVYA), 203–223 (LLAG…LVPF), 235–255 (PAPV…GVVM), 271–291 (VVLG…ALSQ), 297–317 (LLGY…IVLQ), 326–346 (VGVY…VVSL), 373–393 (AAVM…LGFI), 408–430 (WWLV…RVAV), and 455–475 (IVVL…QPLI).

It belongs to the complex I subunit 2 family. NDH-1 is composed of 13 different subunits. Subunits NuoA, H, J, K, L, M, N constitute the membrane sector of the complex.

It localises to the cell inner membrane. It carries out the reaction a quinone + NADH + 5 H(+)(in) = a quinol + NAD(+) + 4 H(+)(out). Functionally, NDH-1 shuttles electrons from NADH, via FMN and iron-sulfur (Fe-S) centers, to quinones in the respiratory chain. The immediate electron acceptor for the enzyme in this species is believed to be ubiquinone. Couples the redox reaction to proton translocation (for every two electrons transferred, four hydrogen ions are translocated across the cytoplasmic membrane), and thus conserves the redox energy in a proton gradient. In Salmonella choleraesuis (strain SC-B67), this protein is NADH-quinone oxidoreductase subunit N.